The primary structure comprises 289 residues: Probable signal peptidase I (289 aa).

Residues M1–L53 lie on the Cytoplasmic side of the membrane. A helical membrane pass occupies residues W54–V74. The Extracellular segment spans residues A75–Q289. Active-site residues include S84 and K162.

It belongs to the peptidase S26 family.

The protein localises to the cell membrane. The enzyme catalyses Cleavage of hydrophobic, N-terminal signal or leader sequences from secreted and periplasmic proteins.. This is Probable signal peptidase I (lepB) from Mycobacterium leprae (strain TN).